The chain runs to 405 residues: Aspartic protease (405 aa).

A signal peptide spans M1–A21. Positions A22–R81 are cleaved as a propeptide — removed in mature form. The Peptidase A1 domain occupies W97–A402. The active site involves D113. The cysteines at positions 126 and 131 are disulfide-linked. Residue D290 is part of the active site. Residues C332 and C366 are joined by a disulfide bond.

The protein belongs to the peptidase A1 family.

It is found in the secreted. Its activity is regulated as follows. Inhibited by pepstatin A. Possesses acidic protease activity. Hydrolyzes casein and azoalbumin in vitro. The protein is Aspartic protease of Phaffia rhodozyma (Yeast).